The following is a 517-amino-acid chain: tRNA-2-methylthio-N(6)-dimethylallyladenosine synthase (517 aa).

Residues 18-137 (RTYQVRTYGC…LPTLLDRARH (120 aa)) enclose the MTTase N-terminal domain. 6 residues coordinate [4Fe-4S] cluster: Cys27, Cys66, Cys100, Cys174, Cys178, and Cys181. Residues 160–397 (RESDYAAWVS…ELQEQICMEE (238 aa)) form the Radical SAM core domain. In terms of domain architecture, TRAM spans 399 to 470 (RVLIGRIVEL…PHHLIADAGI (72 aa)).

The protein belongs to the methylthiotransferase family. MiaB subfamily. In terms of assembly, monomer. The cofactor is [4Fe-4S] cluster.

The protein localises to the cytoplasm. The catalysed reaction is N(6)-dimethylallyladenosine(37) in tRNA + (sulfur carrier)-SH + AH2 + 2 S-adenosyl-L-methionine = 2-methylsulfanyl-N(6)-dimethylallyladenosine(37) in tRNA + (sulfur carrier)-H + 5'-deoxyadenosine + L-methionine + A + S-adenosyl-L-homocysteine + 2 H(+). Catalyzes the methylthiolation of N6-(dimethylallyl)adenosine (i(6)A), leading to the formation of 2-methylthio-N6-(dimethylallyl)adenosine (ms(2)i(6)A) at position 37 in tRNAs that read codons beginning with uridine. The sequence is that of tRNA-2-methylthio-N(6)-dimethylallyladenosine synthase from Mycobacterium leprae (strain TN).